The chain runs to 233 residues: Coproporphyrinogen-III oxidase 2, chloroplastic (233 aa).

Residues 1–48 constitute a chloroplast transit peptide; that stretch reads MASHSSTLFTSPSSFILFSSHRLKSSPNYFTYHFPRSVKRPHFDLRCS. Residue serine 174 coordinates substrate. Catalysis depends on histidine 188, which acts as the Proton donor.

It belongs to the aerobic coproporphyrinogen-III oxidase family. Homodimer.

It is found in the plastid. Its subcellular location is the chloroplast. The enzyme catalyses coproporphyrinogen III + O2 + 2 H(+) = protoporphyrinogen IX + 2 CO2 + 2 H2O. It participates in porphyrin-containing compound metabolism; protoporphyrin-IX biosynthesis; protoporphyrinogen-IX from coproporphyrinogen-III (O2 route): step 1/1. It functions in the pathway porphyrin-containing compound metabolism; chlorophyll biosynthesis. Key enzyme in heme biosynthesis. Catalyzes the oxidative decarboxylation of propionic acid side chains of rings A and B of coproporphyrinogen III. This Arabidopsis thaliana (Mouse-ear cress) protein is Coproporphyrinogen-III oxidase 2, chloroplastic (CPX2).